A 248-amino-acid polypeptide reads, in one-letter code: Triosephosphate isomerase (248 aa).

Position 9–11 (Asn9–Lys11) interacts with substrate. The active-site Electrophile is the His94. The active-site Proton acceptor is the Glu166. Residues Gly172, Ser212, and Gly233–Gly234 each bind substrate.

Belongs to the triosephosphate isomerase family. In terms of assembly, homodimer.

Its subcellular location is the cytoplasm. It catalyses the reaction D-glyceraldehyde 3-phosphate = dihydroxyacetone phosphate. It participates in carbohydrate biosynthesis; gluconeogenesis. It functions in the pathway carbohydrate degradation; glycolysis; D-glyceraldehyde 3-phosphate from glycerone phosphate: step 1/1. Involved in the gluconeogenesis. Catalyzes stereospecifically the conversion of dihydroxyacetone phosphate (DHAP) to D-glyceraldehyde-3-phosphate (G3P). This is Triosephosphate isomerase from Alkaliphilus oremlandii (strain OhILAs) (Clostridium oremlandii (strain OhILAs)).